A 544-amino-acid polypeptide reads, in one-letter code: CTP synthase (544 aa).

The amidoligase domain stretch occupies residues 1–265; that stretch reads MTKFIFVTGG…DNIITEQLQL (265 aa). Residue Ser13 coordinates CTP. Ser13 lines the UTP pocket. ATP contacts are provided by residues 14–19 and Asp71; that span reads SLGKGI. 2 residues coordinate Mg(2+): Asp71 and Glu139. Residues 146–148, 186–191, and Lys222 contribute to the CTP site; these read DIE and KTKPTQ. UTP contacts are provided by residues 186 to 191 and Lys222; that span reads KTKPTQ. Residues 290 to 544 enclose the Glutamine amidotransferase type-1 domain; that stretch reads KIAMVGKYVD…VKAALNNKKA (255 aa). Gly353 is an L-glutamine binding site. Cys380 functions as the Nucleophile; for glutamine hydrolysis in the catalytic mechanism. L-glutamine contacts are provided by residues 381-384, Glu404, and Arg471; that span reads LGMQ. Active-site residues include His517 and Glu519.

This sequence belongs to the CTP synthase family. In terms of assembly, homotetramer.

It catalyses the reaction UTP + L-glutamine + ATP + H2O = CTP + L-glutamate + ADP + phosphate + 2 H(+). The enzyme catalyses L-glutamine + H2O = L-glutamate + NH4(+). The catalysed reaction is UTP + NH4(+) + ATP = CTP + ADP + phosphate + 2 H(+). It participates in pyrimidine metabolism; CTP biosynthesis via de novo pathway; CTP from UDP: step 2/2. Allosterically activated by GTP, when glutamine is the substrate; GTP has no effect on the reaction when ammonia is the substrate. The allosteric effector GTP functions by stabilizing the protein conformation that binds the tetrahedral intermediate(s) formed during glutamine hydrolysis. Inhibited by the product CTP, via allosteric rather than competitive inhibition. Its function is as follows. Catalyzes the ATP-dependent amination of UTP to CTP with either L-glutamine or ammonia as the source of nitrogen. Regulates intracellular CTP levels through interactions with the four ribonucleotide triphosphates. This Neisseria meningitidis serogroup B (strain ATCC BAA-335 / MC58) protein is CTP synthase.